Consider the following 277-residue polypeptide: Large ribosomal subunit protein uL2 (277 aa).

Residues 219–277 are disordered; sequence TVRGSVMNPNDHPHGGGEGRAPIGRKSPMSPWGKPTLGFKTRKKKNKSDKFIVRRRKNK. The segment covering 258-277 has biased composition (basic residues); the sequence is KTRKKKNKSDKFIVRRRKNK.

The protein belongs to the universal ribosomal protein uL2 family. As to quaternary structure, part of the 50S ribosomal subunit. Forms a bridge to the 30S subunit in the 70S ribosome.

One of the primary rRNA binding proteins. Required for association of the 30S and 50S subunits to form the 70S ribosome, for tRNA binding and peptide bond formation. It has been suggested to have peptidyltransferase activity; this is somewhat controversial. Makes several contacts with the 16S rRNA in the 70S ribosome. The chain is Large ribosomal subunit protein uL2 from Bacillus subtilis (strain 168).